We begin with the raw amino-acid sequence, 201 residues long: MKKILTTPIKAEDLQDIRVGDVIYLTGTLVTCRDVCHRRLIELKRPIPYDLNGKAIFHAGPIVRKNGDKWEMVSVGPTTSMRMESFEREFIEQTGVKLVVGKGGMGPLTEEGCQKFKALHVIFPAGCAVLAATQVEEIEEVHWTELGMPESLWVCRGKEFGPLIVSIDTHGNNLIAENKKLFAERRDPIVEEICEHVHYIK.

Histidine 37 is an active-site residue.

It belongs to the class-I fumarase family. In terms of assembly, heterotetramer of two alpha and two beta subunits.

It carries out the reaction (2R,3R)-tartrate = oxaloacetate + H2O. The protein is L(+)-tartrate dehydratase subunit beta (ttdB) of Shigella boydii serotype 4 (strain Sb227).